A 282-amino-acid polypeptide reads, in one-letter code: Protein MGF 505-3R (282 aa).

Belongs to the asfivirus MGF 505 family.

Its function is as follows. Plays a role in virus cell tropism, and may be required for efficient virus replication in macrophages. This is Protein MGF 505-3R from Ornithodoros (relapsing fever ticks).